Here is a 130-residue protein sequence, read N- to C-terminus: uncharacterized protein (130 aa).

Residues 8–28 (PFILMIIVLGLFLVSIGGYYY) traverse the membrane as a helical segment.

The protein resides in the membrane. This is an uncharacterized protein from Bacillus anthracis.